Consider the following 282-residue polypeptide: HTH-type transcriptional activator RhaR (282 aa).

In terms of domain architecture, HTH araC/xylS-type spans 179-277 (DKLITALANS…GMTPSQWRHL (99 aa)). DNA-binding regions (H-T-H motif) lie at residues 196-217 (DAFC…RAQT) and 244-267 (ISEI…TRET).

As to quaternary structure, binds DNA as a dimer.

Its subcellular location is the cytoplasm. In terms of biological role, activates expression of the rhaSR operon in response to L-rhamnose. This Salmonella arizonae (strain ATCC BAA-731 / CDC346-86 / RSK2980) protein is HTH-type transcriptional activator RhaR.